The following is a 510-amino-acid chain: NAD(P)H-quinone oxidoreductase subunit 2 A, chloroplastic (510 aa).

12 consecutive transmembrane segments (helical) span residues 24-44 (LLLF…GLIL), 59-79 (WFYF…LFRW), 99-119 (IFQF…VEYI), 124-144 (MAIT…MFLC), 149-169 (LITI…LSGY), 183-203 (YLLM…WLYG), 229-249 (ISLA…PAPF), 295-315 (WHLL…LLAI), 323-343 (MLAY…IVGD), 354-374 (YMLF…LFGL), 395-415 (ALSL…AGFF), and 418-438 (LYLF…IGLL).

Belongs to the complex I subunit 2 family. In terms of assembly, NDH is composed of at least 16 different subunits, 5 of which are encoded in the nucleus.

Its subcellular location is the plastid. The protein localises to the chloroplast thylakoid membrane. The catalysed reaction is a plastoquinone + NADH + (n+1) H(+)(in) = a plastoquinol + NAD(+) + n H(+)(out). It carries out the reaction a plastoquinone + NADPH + (n+1) H(+)(in) = a plastoquinol + NADP(+) + n H(+)(out). In terms of biological role, NDH shuttles electrons from NAD(P)H:plastoquinone, via FMN and iron-sulfur (Fe-S) centers, to quinones in the photosynthetic chain and possibly in a chloroplast respiratory chain. The immediate electron acceptor for the enzyme in this species is believed to be plastoquinone. Couples the redox reaction to proton translocation, and thus conserves the redox energy in a proton gradient. The sequence is that of NAD(P)H-quinone oxidoreductase subunit 2 A, chloroplastic from Triticum aestivum (Wheat).